We begin with the raw amino-acid sequence, 536 residues long: Cytochrome P450 monooxygenase macC (536 aa).

The chain crosses the membrane as a helical span at residues 2 to 22 (ALLYITTAALALLLLFLRAVF). C448 is a heme binding site.

It belongs to the cytochrome P450 family. Heme is required as a cofactor.

It localises to the membrane. The protein operates within secondary metabolite biosynthesis; terpenoid biosynthesis. Its function is as follows. Cytochrome P450 monooxygenase; part of the gene cluster that mediates the biosynthesis of macrophorins, isoprenoid epoxycyclohexenones containing cyclized drimane moieties. The first step of the pathway is the synthesis of 6-methylsalicylic acid (6-MSA) by the polyketide synthase macA. 6-MSA is then converted to m-cresol by the decarboxylase macB. The cytochrome P450 monooxygenase macC then catalyzes the oxidation of m-cresol to toluquinol. Epoxidation of toluquinol is then performed by the short chain dehydrogenase macD, with the help of macE, and a further prenylation by macG leads to 7-deacetoxyyanuthone A. The next step is the hydroxylation of C-22 of 7-deacetoxyyanuthone A by the cytochrome P450 monooxygenase macH to yield 22-deacetylyanuthone A. O-Mevalon transferase macI then attaches mevalon to the hydroxyl group of 22-deacetylyanuthone A to produce yanuthone E. The terpene cyclase macJ catalyzes the cyclization of 22-deacetylyanuthone A to macrophorin A. MacJ is also able to catalyze cyclization of yanuthone E and 7-deacetoxyyanuthone A to their corresponding macrophorins. The macJ products can be further modified by macH and macJ, as well as by the FAD-dependent monooxygenase macF, to produce additional macrophorins, including 4'-oxomacrophorin A, 4'-oxomacrophorin D and 4'-oxomacrophorin E. The polypeptide is Cytochrome P450 monooxygenase macC (Penicillium terrestre).